Consider the following 320-residue polypeptide: Endolytic peptidoglycan transglycosylase RlpA (320 aa).

The protein belongs to the RlpA family.

Functionally, lytic transglycosylase with a strong preference for naked glycan strands that lack stem peptides. In Rickettsia prowazekii (strain Madrid E), this protein is Endolytic peptidoglycan transglycosylase RlpA.